The sequence spans 219 residues: Large ribosomal subunit protein uL16y (219 aa).

This sequence belongs to the universal ribosomal protein uL16 family. In terms of assembly, component of the small ribosomal subunit. Mature ribosomes consist of a small (40S) and a large (60S) subunit. The 40S subunit contains about 33 different proteins and 1 molecule of RNA (18S). The 60S subunit contains about 49 different proteins and 3 molecules of RNA (25S, 5.8S and 5S).

In Oryza sativa subsp. japonica (Rice), this protein is Large ribosomal subunit protein uL16y (SG12).